A 51-amino-acid chain; its full sequence is Small ribosomal subunit protein eS31 (51 aa).

Residues Cys-22, Cys-25, Cys-40, and Cys-43 each contribute to the Zn(2+) site. The C4-type zinc finger occupies Cys-22–Cys-43.

This sequence belongs to the eukaryotic ribosomal protein eS31 family. As to quaternary structure, part of the 30S ribosomal subunit. Requires Zn(2+) as cofactor.

The protein is Small ribosomal subunit protein eS31 of Methanosphaera stadtmanae (strain ATCC 43021 / DSM 3091 / JCM 11832 / MCB-3).